Reading from the N-terminus, the 742-residue chain is Probable LRR receptor-like serine/threonine-protein kinase At2g02780 (742 aa).

Residues 1–25 form the signal peptide; that stretch reads MQISLQIHLSSFTFLLLIFLLPVLS. At 26-354 the chain is on the extracellular side; that stretch reads ESQVASSESQ…KDSARIKLGL (329 aa). LRR repeat units follow at residues 74 to 96, 104 to 128, 130 to 154, 156 to 177, 178 to 204, 206 to 223, 224 to 247, 249 to 271, and 273 to 294; these read HGHVTELTVTGNRTSKLSGSFHK, LSSLKTLSLTSLGISGSLSPKIITK, SPSLESLNLSSNFISGKIPEEIVSL, NLKSLVLRDNMFWGFVSDDLRG, LSNLQELDLGGNKLGPEVPSLPSKLTT, SLKNNSFRSKIPEQIKKL, NNLQSLDLSSNEFTGSIPEFLFSI, SLQILSLDQNLLSGSLPNSSCTS, and KIITLDVSHNLLTGKLPSCYSS. N-linked (GlcNAc...) asparagine glycosylation is present at asparagine 85. A glycan (N-linked (GlcNAc...) asparagine) is linked at asparagine 137. The N-linked (GlcNAc...) asparagine glycan is linked to asparagine 209. A glycan (N-linked (GlcNAc...) asparagine) is linked at asparagine 266. The N-linked (GlcNAc...) asparagine glycan is linked to asparagine 299. Residues 355-375 form a helical membrane-spanning segment; sequence VILIIIGVIILAAILVLLVLI. Over 376–742 the chain is Cytoplasmic; the sequence is ALKRRRSRSE…HESSMKAIYE (367 aa). Residues 386 to 424 form a disordered region; sequence DDPFEVNNSNNERHASDKVSVCSTTTASSKSLPDSRRVP. Residues 406–417 are compositionally biased toward polar residues; it reads VCSTTTASSKSL. Residues 426 to 720 form the Protein kinase domain; the sequence is TMRSAVIGLP…DVVWNLQYTI (295 aa).

It belongs to the protein kinase superfamily. Ser/Thr protein kinase family.

Its subcellular location is the membrane. It catalyses the reaction L-seryl-[protein] + ATP = O-phospho-L-seryl-[protein] + ADP + H(+). It carries out the reaction L-threonyl-[protein] + ATP = O-phospho-L-threonyl-[protein] + ADP + H(+). This Arabidopsis thaliana (Mouse-ear cress) protein is Probable LRR receptor-like serine/threonine-protein kinase At2g02780.